An 84-amino-acid polypeptide reads, in one-letter code: Putative membrane protein insertion efficiency factor (84 aa).

The segment at 63–84 (WGGSGYDPVPGADPEHDRRPRG) is disordered. The span at 75-84 (DPEHDRRPRG) shows a compositional bias: basic and acidic residues.

This sequence belongs to the UPF0161 family.

The protein localises to the cell inner membrane. In terms of biological role, could be involved in insertion of integral membrane proteins into the membrane. The sequence is that of Putative membrane protein insertion efficiency factor from Cereibacter sphaeroides (strain ATCC 17029 / ATH 2.4.9) (Rhodobacter sphaeroides).